We begin with the raw amino-acid sequence, 89 residues long: MAVTKEQKASIVKKFGASEKDTGDVKVQIALLTEKINQLTNHCKDHPKDAGSRRGLISMVGHRRSLLKYYRRTDIEGYRTILKELNLRK.

This sequence belongs to the universal ribosomal protein uS15 family. Part of the 30S ribosomal subunit. Forms a bridge to the 50S subunit in the 70S ribosome, contacting the 23S rRNA.

Its function is as follows. One of the primary rRNA binding proteins, it binds directly to 16S rRNA where it helps nucleate assembly of the platform of the 30S subunit by binding and bridging several RNA helices of the 16S rRNA. In terms of biological role, forms an intersubunit bridge (bridge B4) with the 23S rRNA of the 50S subunit in the ribosome. In Treponema denticola (strain ATCC 35405 / DSM 14222 / CIP 103919 / JCM 8153 / KCTC 15104), this protein is Small ribosomal subunit protein uS15.